A 132-amino-acid polypeptide reads, in one-letter code: Ribosome-binding factor A (132 aa).

Belongs to the RbfA family. Monomer. Binds 30S ribosomal subunits, but not 50S ribosomal subunits or 70S ribosomes.

It is found in the cytoplasm. Its function is as follows. One of several proteins that assist in the late maturation steps of the functional core of the 30S ribosomal subunit. Associates with free 30S ribosomal subunits (but not with 30S subunits that are part of 70S ribosomes or polysomes). Required for efficient processing of 16S rRNA. May interact with the 5'-terminal helix region of 16S rRNA. The chain is Ribosome-binding factor A from Pectobacterium carotovorum subsp. carotovorum (strain PC1).